The sequence spans 136 residues: Class I hydrophobin A (136 aa).

Positions 1-16 are cleaved as a signal peptide; sequence MRFALAITTLIAAVTA. 4 disulfide bridges follow: C39/C109, C47/C103, C48/C85, and C110/C128.

The protein belongs to the fungal hydrophobin family. Expressed in aerial conidia, in vitro blastospores, submerged conidia, and cells sporulating on chitin and insect cuticle, with hyd1 expression peaking in growing mycelia.

The protein localises to the secreted. Its subcellular location is the cell wall. It localises to the spore coat. It is found in the vacuole. The protein resides in the cytoplasmic vesicle. Functionally, aerial growth, conidiation, and dispersal of filamentous fungi in the environment rely upon a capability of their secreting small amphipathic proteins called hydrophobins (HPBs) with low sequence identity. Class I can self-assemble into an outermost layer of rodlet bundles on aerial cell surfaces, conferring cellular hydrophobicity that supports fungal growth, development and dispersal; whereas Class II form highly ordered films at water-air interfaces through intermolecular interactions but contribute nothing to the rodlet structure. Hyd1A contributes to certain cell wall-related features, such as hydrophobicity but is not involved in cell wall-related events during fungal proliferation in host hemocoel. Hyd1A and hyd1B coregulate the formation, morphology and orderly assembly of rodlet bundles required for conidial hydrophobicity and infectivity. Contributes to the spore coat rodlet layer. The sequence is that of Class I hydrophobin A from Beauveria bassiana (strain ARSEF 2860) (White muscardine disease fungus).